A 171-amino-acid chain; its full sequence is Protein-export protein SecB (171 aa).

This sequence belongs to the SecB family. In terms of assembly, homotetramer, a dimer of dimers. One homotetramer interacts with 1 SecA dimer.

It localises to the cytoplasm. Its function is as follows. One of the proteins required for the normal export of preproteins out of the cell cytoplasm. It is a molecular chaperone that binds to a subset of precursor proteins, maintaining them in a translocation-competent state. It also specifically binds to its receptor SecA. The protein is Protein-export protein SecB of Jannaschia sp. (strain CCS1).